A 515-amino-acid chain; its full sequence is Elongation factor 1-alpha S (515 aa).

In terms of domain architecture, tr-type G spans 5–258 (KTHINLVVIG…DAMKPPKRPT (254 aa)). Residues 14 to 21 (GHVDAGKS) form a G1 region. A GTP-binding site is contributed by 14–21 (GHVDAGKS). Lysine 55 carries the N6,N6-dimethyllysine modification. The G2 stretch occupies residues 70-74 (GITID). N6,N6,N6-trimethyllysine is present on lysine 79. Residues 91–94 (DAPG) form a G3 region. GTP-binding positions include 91–95 (DAPGH) and 151–154 (NKMD). The G4 stretch occupies residues 151 to 154 (NKMD). A disordered region spans residues 187–206 (KKDKGDKKKGDKKEKKDKKD). Basic and acidic residues predominate over residues 189 to 206 (DKGDKKKGDKKEKKDKKD). The tract at residues 222–224 (SGW) is G5. N6-methyllysine is present on lysine 289. At lysine 334 the chain carries N6,N6,N6-trimethyllysine. The segment at 396–419 (KRGKQTHDVSDDTEWATKDDAEPR) is disordered. Residues 398–419 (GKQTHDVSDDTEWATKDDAEPR) show a composition bias toward basic and acidic residues. Lysine 441 bears the N6,N6,N6-trimethyllysine mark.

The protein belongs to the TRAFAC class translation factor GTPase superfamily. Classic translation factor GTPase family. EF-Tu/EF-1A subfamily.

The protein localises to the cytoplasm. This protein promotes the GTP-dependent binding of aminoacyl-tRNA to the A-site of ribosomes during protein biosynthesis. In Porphyra purpurea (Red seaweed), this protein is Elongation factor 1-alpha S (TEF-S).